Here is a 510-residue protein sequence, read N- to C-terminus: Lysine--tRNA ligase (510 aa).

Positions 420 and 427 each coordinate Mg(2+).

It belongs to the class-II aminoacyl-tRNA synthetase family. As to quaternary structure, homodimer. The cofactor is Mg(2+).

Its subcellular location is the cytoplasm. The catalysed reaction is tRNA(Lys) + L-lysine + ATP = L-lysyl-tRNA(Lys) + AMP + diphosphate. The polypeptide is Lysine--tRNA ligase (Vibrio vulnificus (strain CMCP6)).